The primary structure comprises 402 residues: Zinc finger CCHC domain-containing protein 12 (402 aa).

Residues 1–20 (MASILSRLGSSRGQNSPLPP) are disordered. Residues 346 to 363 (IHCSHCGEEGHSKETCDN) form a CCHC-type zinc finger. The segment at 383–402 (HAEERARGAPGEPIGLSEPQ) is disordered.

This sequence belongs to the ZCCHC12 family. Interacts with SMAD1 and CREB-binding protein (CBP). Forms a protein-DNA complex through its association with SMAD1. In embryonic brains expression is restricted to the ventral region of the forebrain, including the septum, amygdala, caudal putamen, and in the basal-forebrain cholinergic neurons. In adults, expressed in the brain, and at low levels in the testis.

Transcriptional coactivator in the bone morphogenetic protein (BMP)-signaling pathway. It positively modulates BMP signaling by interacting with SMAD1 and associating with CBP in the transcription complex. It contributes to the BMP-induced enhancement of cholinergic-neuron-specific gene expression. The protein is Zinc finger CCHC domain-containing protein 12 (Zcchc12) of Mus musculus (Mouse).